The chain runs to 221 residues: Histone H1.3 (221 aa).

A compositionally biased stretch (low complexity) spans 1-17; it reads MSETAPVAPAAPAPAEK. The interval 1-42 is disordered; sequence MSETAPVAPAAPAPAEKTPVKKKAKKSGVAAGKRKASGPPVS. An N-acetylserine modification is found at Ser-2. Ser-2 carries the post-translational modification Phosphoserine. Residue Lys-17 is modified to N6-acetyllysine. Thr-18 carries the phosphothreonine modification. Over residues 20–36 the composition is skewed to basic residues; the sequence is VKKKAKKSGVAAGKRKA. N6-(beta-hydroxybutyryl)lysine occurs at positions 35 and 53. The 74-residue stretch at 37-110 folds into the H15 domain; that stretch reads SGPPVSELIT…GASGSFKLNK (74 aa). Arg-55 is modified (citrulline). N6-(beta-hydroxybutyryl)lysine occurs at positions 65, 86, and 91. The interval 87 to 221 is disordered; it reads SLVSKGTLVQ…KAKKAVSKKK (135 aa). Position 105 is a phosphoserine; by PKC (Ser-105). N6-(beta-hydroxybutyryl)lysine is present on Lys-107. Composition is skewed to basic residues over residues 120–141, 150–161, 170–187, and 194–221; these read KGKK…KPKK, KAAKKTPKKVKK, KVAK…KKPT, and KAPK…SKKK.

Belongs to the histone H1/H5 family. H1 histones are progressively phosphorylated during the cell cycle, becoming maximally phosphorylated during late G2 phase and M phase, and being dephosphorylated sharply thereafter. Post-translationally, citrullination at Arg-55 (H1R54ci) by PADI4 takes place within the DNA-binding site of H1 and results in its displacement from chromatin and global chromatin decondensation, thereby promoting pluripotency and stem cell maintenance.

The protein localises to the nucleus. It is found in the chromosome. In terms of biological role, H1 histones bind to linker DNA between nucleosomes forming the macromolecular structure known as the chromatin fiber. H1 histones are necessary for the condensation of nucleosome chains into higher-order structured fibers. Also acts as a regulator of individual gene transcription through chromatin remodeling, nucleosome spacing and DNA methylation. This is Histone H1.3 from Bos taurus (Bovine).